A 158-amino-acid polypeptide reads, in one-letter code: MSTIPITKRGAEMLKDELQRLKTKERPAVVNAIAEARAQGDLSENADYDAAKERQGFIEGRILEIESKLAAAQVIDPAGLDADGRIVFGATIDLEDLDSGKPVTYQIVGDDEADLDSGKISISSPIARALIGKYEGDVATVVAPGGEREYEVRAVKYL.

Belongs to the GreA/GreB family.

Its function is as follows. Necessary for efficient RNA polymerase transcription elongation past template-encoded arresting sites. The arresting sites in DNA have the property of trapping a certain fraction of elongating RNA polymerases that pass through, resulting in locked ternary complexes. Cleavage of the nascent transcript by cleavage factors such as GreA or GreB allows the resumption of elongation from the new 3'terminus. GreA releases sequences of 2 to 3 nucleotides. This Ralstonia nicotianae (strain ATCC BAA-1114 / GMI1000) (Ralstonia solanacearum) protein is Transcription elongation factor GreA.